The chain runs to 104 residues: Large ribosomal subunit protein uL24 (104 aa).

It belongs to the universal ribosomal protein uL24 family. In terms of assembly, part of the 50S ribosomal subunit.

Its function is as follows. One of two assembly initiator proteins, it binds directly to the 5'-end of the 23S rRNA, where it nucleates assembly of the 50S subunit. In terms of biological role, one of the proteins that surrounds the polypeptide exit tunnel on the outside of the subunit. The polypeptide is Large ribosomal subunit protein uL24 (Treponema denticola (strain ATCC 35405 / DSM 14222 / CIP 103919 / JCM 8153 / KCTC 15104)).